The primary structure comprises 837 residues: Tuftelin-interacting protein 11 (837 aa).

Composition is skewed to basic and acidic residues over residues 1–13 (MSLSHLYRDGEGH) and 44–64 (QTKEEATYGVWAERDSDEERP). Disordered regions lie at residues 1-21 (MSLSHLYRDGEGHLDDDDDER), 34-73 (EFNPNRQRHWQTKEEATYGVWAERDSDEERPSFGGKRARD), and 85-135 (LKKG…FAGG). The tract at residues 1–50 (MSLSHLYRDGEGHLDDDDDERENFEITDWDLQNEFNPNRQRHWQTKEEAT) is required for interaction with DHX15. Residues serine 2, serine 59, serine 95, and serine 98 each carry the phosphoserine modification. The span at 91–100 (EEADSEDSDA) shows a compositional bias: acidic residues. Basic and acidic residues predominate over residues 101–116 (EEKPVKQEDFPKDLGP). At serine 144 the chain carries Phosphoserine. The G-patch domain maps to 149-195 (TKGIGQKLLQKMGYVPGRGLGKNAQGIINPIEAKQRKGKGAVGAYGS). A disordered region spans residues 183–236 (QRKGKGAVGAYGSERTTQSLQDFPVADSEEEAEEEFQKELSQWRKDPSGSKKKP). Serine 210 carries the phosphoserine modification. Basic and acidic residues predominate over residues 217 to 231 (EFQKELSQWRKDPSG). The Nuclear localization signal motif lies at 700-705 (VKDKFN). The segment at 710 to 734 (IMNRAVSSNVGAYMQPGARENIAYL) is required for nuclear speckle localization.

This sequence belongs to the TFP11/STIP family. As to quaternary structure, identified in the spliceosome C complex. Found in the Intron Large (IL) complex, a post-mRNA release spliceosomal complex containing the excised intron, U2, U5 and U6 snRNPs, and splicing factors. Interacts with TUFT1. Interacts with DHX15; indicative for a recruitment of DHX15 to the IL complex. Interacts with GCFC2.

The protein resides in the cytoplasm. The protein localises to the nucleus. Its function is as follows. Involved in pre-mRNA splicing, specifically in spliceosome disassembly during late-stage splicing events. Intron turnover seems to proceed through reactions in two lariat-intron associated complexes termed Intron Large (IL) and Intron Small (IS). In cooperation with DHX15 seems to mediate the transition of the U2, U5 and U6 snRNP-containing IL complex to the snRNP-free IS complex leading to efficient debranching and turnover of excised introns. May play a role in the differentiation of ameloblasts and odontoblasts or in the forming of the enamel extracellular matrix. The protein is Tuftelin-interacting protein 11 (Tfip11) of Rattus norvegicus (Rat).